Here is a 415-residue protein sequence, read N- to C-terminus: Amino acid decarboxylase lolD2 (415 aa).

The residue at position 62 (Lys-62) is an N6-(pyridoxal phosphate)lysine. Residues Ser-194, Gly-231, and 266–269 each bind pyridoxal 5'-phosphate; that span reads EPGT. Substrate is bound at residue 315–316; that stretch reads IV. Cys-351 functions as the Proton donor; shared with dimeric partner in the catalytic mechanism. Residue Cys-351 is modified to S-nitrosocysteine. Asp-352 is a binding site for substrate. A pyridoxal 5'-phosphate-binding site is contributed by Tyr-381.

It belongs to the Orn/Lys/Arg decarboxylase class-II family. As to quaternary structure, homodimer. Requires pyridoxal 5'-phosphate as cofactor.

It participates in alkaloid biosynthesis. Amino acid decarboxylase; part of the gene cluster that mediates the biosynthesis of loline alkaloids, potent insecticidal agents composed of a pyrrolizidine ring system and an uncommon ether bridge linking carbons 2 and 7. Lolines are structurally differentiated by the various modifications of the L-amino group and include norloline, loline, N-methylloline, N-acetylloline, N-acetylnorloline, and N-formylloline. The first committed step is the condensation of O-acetyl-L-homoserine (derived from L-aspartic acid) and L-proline, probably catalyzed by the gamma-type pyridoxal 5'-phosphate(PLP)-dependent enzyme lolC, to give the diamino diacid, NACPP. Ensuing cyclization, decarboxylation, and acetylation steps yield 1-exo-acetamidopyrrolizidine (AcAP). LolO is required for installation of the ether bridge upon the pathway intermediate, 1-exo-acetamidopyrrolizidine (AcAP). In sequential 2-oxoglutarate- and O(2)-consuming steps, lolO removes hydrogens from C2 and C7 of AcAP to form both carbon-oxygen bonds in N-acetylnorloline (NANL), the precursor to all other lolines. The enzymes lolD, lolE, lolF and lolT have also been proposed to be involved in the ether-bridge installation. Further processing of the exocyclic moiety of NANL by fungal N-acetamidase (LolN), methyltransferase (LolM), and cytochrome P450 (LolP) enzymes, with occasional involvement of a plant acetyltransferase, generates the other known lolines. LolN transforms NANL to norlonine which is monomethylated and dimethylated to respectively lonine and N-methyllonine (NML) by lolM. LolP catalyzes hydroxylation of the methyl group in N-methylloline (NML) and further oxygenation to N-formylloline (NFL). A plant acetyltransferase is responsible for the acetylation of loline to form N-acetylloline (NAL). LolA might interact with aspartate kinase to prevent feedback inhibition of its activity by these end products and thereby promote production of L-homoserine from L-aspartate. This is Amino acid decarboxylase lolD2 from Epichloe uncinata (Endophyte fungus).